The sequence spans 52 residues: MEQWKCNICGYIYNPETGDPEGDIPAGTSFESLPDSWMCPVCGAGKEEFTKI.

In terms of domain architecture, Rubredoxin-like spans 1–52 (MEQWKCNICGYIYNPETGDPEGDIPAGTSFESLPDSWMCPVCGAGKEEFTKI). Residues Cys6, Cys9, Cys39, and Cys42 each coordinate Fe cation.

The protein belongs to the rubredoxin family. As to quaternary structure, monomer. It depends on Fe(3+) as a cofactor.

Serves as an electron acceptor for pyruvate ferredoxin oxidoreductase (PFOR). This is Rubredoxin-2 (rub2) from Chlorobaculum tepidum (strain ATCC 49652 / DSM 12025 / NBRC 103806 / TLS) (Chlorobium tepidum).